The primary structure comprises 176 residues: ATP-dependent protease subunit HslV (176 aa).

Threonine 6 is an active-site residue. Na(+)-binding residues include serine 161, cysteine 164, and threonine 167.

Belongs to the peptidase T1B family. HslV subfamily. As to quaternary structure, a double ring-shaped homohexamer of HslV is capped on each side by a ring-shaped HslU homohexamer. The assembly of the HslU/HslV complex is dependent on binding of ATP.

Its subcellular location is the cytoplasm. The enzyme catalyses ATP-dependent cleavage of peptide bonds with broad specificity.. With respect to regulation, allosterically activated by HslU binding. In terms of biological role, protease subunit of a proteasome-like degradation complex believed to be a general protein degrading machinery. The chain is ATP-dependent protease subunit HslV from Aquifex aeolicus (strain VF5).